A 374-amino-acid chain; its full sequence is LIM domain-binding protein 1-A (374 aa).

Disordered stretches follow at residues 1–24 (MLDR…IGRH), 249–297 (PPAE…ALSS), and 322–374 (TRLE…QSSQ). The segment covering 267-297 (SGGSTMSSGGGNNNNSNSKKKSPASSFALSS) has biased composition (low complexity). An LIM interaction domain (LID) domain is found at 299 to 338 (DVMVVGEPTLMGGEFGDEDERLITRLENTQFDAANGIDDE). A compositionally biased stretch (polar residues) spans 341 to 374 (FNSSPTMGTNSPWNSKAPSSQQGKNDNPSSQSSQ).

This sequence belongs to the LDB family. In terms of tissue distribution, expressed ubiquitously in the embryo and adult.

The protein localises to the nucleus. Functionally, binds to the LIM domain of a wide variety of LIM domain-containing transcription factors. This is LIM domain-binding protein 1-A (ldb1a) from Danio rerio (Zebrafish).